We begin with the raw amino-acid sequence, 477 residues long: Cysteine--tRNA ligase (477 aa).

Cys28 contributes to the Zn(2+) binding site. The 'HIGH' region signature appears at 30-40 (PTVYDYPHLGH). Zn(2+)-binding residues include Cys208, His233, and Glu237. The 'KMSKS' region signature appears at 265-269 (KMSKS). Lys268 is a binding site for ATP.

Belongs to the class-I aminoacyl-tRNA synthetase family. The cofactor is Zn(2+).

The protein resides in the cytoplasm. It carries out the reaction tRNA(Cys) + L-cysteine + ATP = L-cysteinyl-tRNA(Cys) + AMP + diphosphate. The polypeptide is Cysteine--tRNA ligase (Pyrococcus furiosus (strain ATCC 43587 / DSM 3638 / JCM 8422 / Vc1)).